Reading from the N-terminus, the 162-residue chain is Peptide deformylase-like (162 aa).

It belongs to the polypeptide deformylase family.

This chain is Peptide deformylase-like, found in Staphylococcus aureus (strain MRSA252).